Reading from the N-terminus, the 213-residue chain is Motile sperm domain-containing protein 1 (213 aa).

An MSP domain is found at 16 to 143 (PVFVFPTELI…KEHLTESLFF (128 aa)). Transmembrane regions (helical) follow at residues 159–179 (SLLT…PTLG) and 191–211 (LSVN…MAIL). Residues 205–208 (LITM) carry the Nuclear export signal motif.

It localises to the endoplasmic reticulum membrane. It is found in the golgi apparatus membrane. Functionally, plays a role in differentiation and/or proliferation of mesenchymal stem cells. Proposed to be involved in epithelial-to-mesenchymal transition (EMT). However, another study suggests that it is not required for EMT or stem cell self-renewal and acts during later stages of differentiation. The polypeptide is Motile sperm domain-containing protein 1 (MOSPD1) (Pongo abelii (Sumatran orangutan)).